The sequence spans 313 residues: Aspartate carbamoyltransferase catalytic subunit (313 aa).

The carbamoyl phosphate site is built by Arg-58 and Thr-59. Lys-86 is an L-aspartate binding site. Positions 108, 136, and 139 each coordinate carbamoyl phosphate. Residues Arg-169 and Arg-223 each coordinate L-aspartate. Gly-265 and Pro-266 together coordinate carbamoyl phosphate.

Belongs to the aspartate/ornithine carbamoyltransferase superfamily. ATCase family. In terms of assembly, heterododecamer (2C3:3R2) of six catalytic PyrB chains organized as two trimers (C3), and six regulatory PyrI chains organized as three dimers (R2).

It catalyses the reaction carbamoyl phosphate + L-aspartate = N-carbamoyl-L-aspartate + phosphate + H(+). It functions in the pathway pyrimidine metabolism; UMP biosynthesis via de novo pathway; (S)-dihydroorotate from bicarbonate: step 2/3. Its function is as follows. Catalyzes the condensation of carbamoyl phosphate and aspartate to form carbamoyl aspartate and inorganic phosphate, the committed step in the de novo pyrimidine nucleotide biosynthesis pathway. This chain is Aspartate carbamoyltransferase catalytic subunit, found in Anaeromyxobacter sp. (strain K).